Here is a 631-residue protein sequence, read N- to C-terminus: FAST kinase domain-containing protein 4 (631 aa).

The transit peptide at 1–107 directs the protein to the mitochondrion; the sequence is MAAHLVKRCT…NQAAMVLIRL (107 aa). Position 553 is a phosphoserine (serine 553). The RAP domain occupies 561 to 619; the sequence is LAFLRWEFPNFNSRSKDLLGRFVLARRHIVAAGFLIVDVPFYEWLELKSEWQKGAYLKD.

The protein belongs to the FAST kinase family. As to expression, ubiquitously expressed. Expression detected in spleen, thymus, testis, ovary, colon, heart, smooth muscle, kidney, brain, lung, liver and white adipose tissue with highest expression in smooth muscle.

Its subcellular location is the mitochondrion matrix. Functionally, plays a role in processing of mitochondrial RNA precursors and in stabilization of a subset of mature mitochondrial RNA species, such as MT-CO1, MT-CO2, MT-CYB, MT-CO3, MT-ND3, MT-ND5 and MT-ATP8/6. May play a role in cell cycle progression. This chain is FAST kinase domain-containing protein 4, found in Homo sapiens (Human).